Consider the following 226-residue polypeptide: tRNA (guanine-N(7)-)-methyltransferase (226 aa).

The tract at residues 1–22 is disordered; the sequence is MTTPQQPHGPLRSFGRLKSRPV. 4 residues coordinate S-adenosyl-L-methionine: glutamate 59, glutamate 84, aspartate 111, and aspartate 133. Aspartate 133 is a catalytic residue. Lysine 137 contacts substrate. An interaction with RNA region spans residues 139–144; the sequence is RHNKRR. Substrate contacts are provided by residues aspartate 169 and 206-209; that span reads TRYE.

It belongs to the class I-like SAM-binding methyltransferase superfamily. TrmB family.

The enzyme catalyses guanosine(46) in tRNA + S-adenosyl-L-methionine = N(7)-methylguanosine(46) in tRNA + S-adenosyl-L-homocysteine. It functions in the pathway tRNA modification; N(7)-methylguanine-tRNA biosynthesis. Catalyzes the formation of N(7)-methylguanine at position 46 (m7G46) in tRNA. In Caulobacter vibrioides (strain ATCC 19089 / CIP 103742 / CB 15) (Caulobacter crescentus), this protein is tRNA (guanine-N(7)-)-methyltransferase.